The chain runs to 209 residues: Large ribosomal subunit protein uL3 (209 aa).

Positions 128–154 are disordered; it reads QQRGPMTHGSKFHRAPGSMGASSDPSR.

This sequence belongs to the universal ribosomal protein uL3 family. Part of the 50S ribosomal subunit. Forms a cluster with proteins L14 and L19.

Functionally, one of the primary rRNA binding proteins, it binds directly near the 3'-end of the 23S rRNA, where it nucleates assembly of the 50S subunit. The polypeptide is Large ribosomal subunit protein uL3 (Clostridium beijerinckii (strain ATCC 51743 / NCIMB 8052) (Clostridium acetobutylicum)).